A 1324-amino-acid polypeptide reads, in one-letter code: DNA-directed RNA polymerase subunit beta' (1324 aa).

Zn(2+) is bound by residues cysteine 219, cysteine 292, cysteine 299, and cysteine 302. Residues 1293-1324 (ARDFEFASSDVEEDELTEEDDDYGDEEEEDAF) are disordered. Residues 1302–1324 (DVEEDELTEEDDDYGDEEEEDAF) are compositionally biased toward acidic residues.

It belongs to the RNA polymerase beta' chain family. RpoC2 subfamily. In terms of assembly, in cyanobacteria the RNAP catalytic core is composed of 2 alpha, 1 beta, 1 beta', 1 gamma and 1 omega subunit. When a sigma factor is associated with the core the holoenzyme is formed, which can initiate transcription. The cofactor is Zn(2+).

It carries out the reaction RNA(n) + a ribonucleoside 5'-triphosphate = RNA(n+1) + diphosphate. Its function is as follows. DNA-dependent RNA polymerase catalyzes the transcription of DNA into RNA using the four ribonucleoside triphosphates as substrates. The protein is DNA-directed RNA polymerase subunit beta' of Thermosynechococcus vestitus (strain NIES-2133 / IAM M-273 / BP-1).